A 430-amino-acid polypeptide reads, in one-letter code: Serine--tRNA ligase (430 aa).

Residue Thr-236–Glu-238 participates in L-serine binding. An ATP-binding site is contributed by Arg-267 to Glu-269. Glu-290 contributes to the L-serine binding site. Glu-354–Ser-357 is a binding site for ATP. Ser-390 contributes to the L-serine binding site.

Belongs to the class-II aminoacyl-tRNA synthetase family. Type-1 seryl-tRNA synthetase subfamily. Homodimer. The tRNA molecule binds across the dimer.

It localises to the cytoplasm. The enzyme catalyses tRNA(Ser) + L-serine + ATP = L-seryl-tRNA(Ser) + AMP + diphosphate + H(+). It carries out the reaction tRNA(Sec) + L-serine + ATP = L-seryl-tRNA(Sec) + AMP + diphosphate + H(+). The protein operates within aminoacyl-tRNA biosynthesis; selenocysteinyl-tRNA(Sec) biosynthesis; L-seryl-tRNA(Sec) from L-serine and tRNA(Sec): step 1/1. Catalyzes the attachment of serine to tRNA(Ser). Is also able to aminoacylate tRNA(Sec) with serine, to form the misacylated tRNA L-seryl-tRNA(Sec), which will be further converted into selenocysteinyl-tRNA(Sec). This is Serine--tRNA ligase from Mannheimia succiniciproducens (strain KCTC 0769BP / MBEL55E).